A 65-amino-acid polypeptide reads, in one-letter code: Movement protein TGBp3 (65 aa).

Residues 1–6 (MLPKMQ) lie on the Lumenal side of the membrane. The chain crosses the membrane as a helical span at residues 7–26 (PSAQCLIVFSLAFVLGWYVL). Topologically, residues 27–65 (RPGNTSCVLLITGESVRLVNCELTKDLVEAVLLRPLKHL) are cytoplasmic.

The protein belongs to the Tymovirales TGBp3 protein family.

It is found in the host endoplasmic reticulum membrane. Functionally, plays a role in viral cell-to-cell propagation, by facilitating genome transport to neighboring plant cells through plasmosdesmata. May induce the formation of granular vesicles derived from the Endoplasmic reticulum, which align on actin filaments. In Potato virus S (strain Peruvian), this protein is Movement protein TGBp3.